Reading from the N-terminus, the 1500-residue chain is ABC transporter G family member 42 (1500 aa).

The disordered stretch occupies residues 26 to 56 (VDEAFMPQNSGGGGGSRGRRRSGRGGTADDD). The 274-residue stretch at 182–455 (LGLVGVRPGR…FESCGFRCPE (274 aa)) folds into the ABC transporter 1 domain. 215–222 (GPPSSGKT) contributes to the ATP binding site. The 214-residue stretch at 533 to 746 (ELLKASFAKE…GYNALAVNEF (214 aa)) folds into the ABC transmembrane type-2 1 domain. Transmembrane regions (helical) follow at residues 551–571 (FVYIFKTIQLIIVALVASTVF), 584–604 (GFVYIGALLFSLIVNMFNGFA), 639–659 (IPFSIIESIVWVIVTYYTIGF), 670–690 (LLLVFLIQQMAGGLFRATAGL), 695–715 (IIAQTGGALALLIFFVLGGFL), 724–744 (WWIWGYWVSPLMYGYNALAVN), and 783–803 (FWIGAAGLLGFTMFFNVLFTL). Residues 822 to 834 (TAKEAEGNGDARH) show a composition bias toward basic and acidic residues. A disordered region spans residues 822-850 (TAKEAEGNGDARHTVRNGSTKSNGGNHKE). Over residues 837–846 (RNGSTKSNGG) the composition is skewed to polar residues. Positions 894-1151 (MSFDDVNYYV…KMIEYFEAIP (258 aa)) constitute an ABC transporter 2 domain. 939–946 (GVSGAGKT) contributes to the ATP binding site. In terms of domain architecture, ABC transmembrane type-2 2 spans 1224–1438 (GQFRACLWKQ…TVYGLIVTQY (215 aa)). 7 consecutive transmembrane segments (helical) span residues 1245-1265 (LVRFSFTLFTALLLGTIFWKI), 1277-1297 (MVIGAMYTAVMFIGINNCATV), 1331-1351 (IPYVFVQTAYYTLIVYAMMSF), 1358-1378 (FFWFFFVSYFSFLYFTYYGMM), 1388-1408 (VAAIFAAAFYSLFNLFSGFFI), 1416-1436 (WWIWYYWLCPLAWTVYGLIVT), and 1472-1492 (VVAPVLVLFAVFFAFMYAICI).

Belongs to the ABC transporter superfamily. ABCG family. PDR (TC 3.A.1.205) subfamily.

It localises to the membrane. In terms of biological role, may be a general defense protein. This chain is ABC transporter G family member 42, found in Oryza sativa subsp. japonica (Rice).